Here is a 777-residue protein sequence, read N- to C-terminus: Gliding motility regulatory protein (777 aa).

An HPt domain is found at 1–108 (MDTEALKKSL…SDLNEDLSGA (108 aa)). His-49 carries the post-translational modification Phosphohistidine; by autocatalysis. Disordered regions lie at residues 129 to 149 (TPPA…PPAP) and 164 to 212 (PAPV…KSAV). 2 stretches are compositionally biased toward pro residues: residues 139 to 149 (VAPPPAPPPAP) and 164 to 177 (PAPV…PPTQ). Residues 178–197 (APVAEPGAHAAAAAPHPAAA) show a composition bias toward low complexity. The Histidine kinase domain occupies 270–509 (DISNEVREQL…TITLRLPQSL (240 aa)). Residues 511–645 (LMKVLLVRLG…VPDIMAEVRR (135 aa)) enclose the CheW-like domain. Positions 660-776 (RVLLVDDSPI…EVLAQAIDRL (117 aa)) constitute a Response regulatory domain. Asp-709 is subject to 4-aspartylphosphate.

It carries out the reaction ATP + protein L-histidine = ADP + protein N-phospho-L-histidine.. Functionally, frzE is involved in a sensory transduction pathway that controls the frequency at which cells reverse their gliding direction. FrzE seems to be capable of autophosphorylating itself on a histidine residue and then to transfer that group to an aspartate residue in the C-terminal part of the protein. The sequence is that of Gliding motility regulatory protein (frzE) from Myxococcus xanthus.